The primary structure comprises 466 residues: Argininosuccinate lyase (466 aa).

Serine 27, asparagine 114, and threonine 159 together coordinate 2-(N(omega)-L-arginino)succinate. Histidine 160 acts as the Proton acceptor in catalysis. The active-site Proton donor is serine 281. Residues asparagine 289, tyrosine 321, glutamine 326, and lysine 329 each contribute to the 2-(N(omega)-L-arginino)succinate site.

It belongs to the lyase 1 family. Argininosuccinate lyase subfamily. Homotetramer. As to expression, eye lens.

The enzyme catalyses 2-(N(omega)-L-arginino)succinate = fumarate + L-arginine. The protein operates within amino-acid biosynthesis; L-arginine biosynthesis; L-arginine from L-ornithine and carbamoyl phosphate: step 3/3. In terms of biological role, delta crystallin, the principal crystallin in embryonic lens, is found only in birds and reptiles. This protein may also function as an enzymatically active argininosuccinate lyase. This Gallus gallus (Chicken) protein is Argininosuccinate lyase (ASL2).